Here is a 487-residue protein sequence, read N- to C-terminus: ATP synthase subunit beta, plastid (487 aa).

169–176 (GGAGVGKT) contacts ATP.

The protein belongs to the ATPase alpha/beta chains family. In terms of assembly, F-type ATPases have 2 components, CF(1) - the catalytic core - and CF(0) - the membrane proton channel. CF(1) has five subunits: alpha(3), beta(3), gamma(1), delta(1), epsilon(1). CF(0) has four main subunits: a(1), b(1), b'(1) and c(9-12).

It localises to the plastid membrane. It catalyses the reaction ATP + H2O + 4 H(+)(in) = ADP + phosphate + 5 H(+)(out). Produces ATP from ADP in the presence of a proton gradient across the membrane. The catalytic sites are hosted primarily by the beta subunits. This Cuscuta pentagona (Five-angled dodder) protein is ATP synthase subunit beta, plastid (atpB).